We begin with the raw amino-acid sequence, 221 residues long: Potassium voltage-gated channel subfamily E member 4 (221 aa).

Over 1–86 (MHFLTIYPNC…AGGGSGNGNE (86 aa)) the chain is Extracellular. Asparagine 9 is a glycosylation site (N-linked (GlcNAc...) asparagine). Over residues 58–72 (LNSTHPGTAASSSPL) the composition is skewed to polar residues. The tract at residues 58-77 (LNSTHPGTAASSSPLESRAA) is disordered. Residues 87 to 107 (YFYILVVMSFYGIFLIGIMLG) traverse the membrane as a helical segment. At 108 to 221 (YMKSKRREKK…GSSENIHQNS (114 aa)) the chain is on the cytoplasmic side. A disordered region spans residues 175-221 (SVSSESSSPDVHLTIQEEGADDELEETSETPLNESSEGSSENIHQNS). Over residues 192–202 (EGADDELEETS) the composition is skewed to acidic residues. The span at 203-221 (ETPLNESSEGSSENIHQNS) shows a compositional bias: polar residues.

The protein belongs to the potassium channel KCNE family. As to quaternary structure, forms heterooligomers with KCNA3, inhibiting its activity by impairing localization to the cell membrane. The stoichiometry of KCNA3 and KCNE4 in the heterooligomers are 4:1, 4:2, 4:3 or 4:4 respectively. Increasing the number of KCNE4 subunits steadily slows the activation KCNA3 and decreases its abundance at the cell membrane. However, a single subunit of KCNE4 is sufficient for the cooperative enhancement of the inactivating function of the channel. However, a single subunit of KCNE4 is sufficient for the cooperative enhancement of the inactivating function of the channel. Interacts with KCNQ1; impairs KCNQ1 localization in lipid rafts and inhibits voltage-gated potassium channel activity. In terms of tissue distribution, predominantly expressed in embryo and adult uterus. Low expression found in kidney, small intestine, lung and heart. Detected in kidney, thymus, and uterus (at protein level).

Its subcellular location is the membrane. Its function is as follows. Ancillary protein that functions as a regulatory subunit of the voltage-gated potassium (Kv) channel complex composed of pore-forming and potassium-conducting alpha subunits and of regulatory beta subunits. KCNE4 beta subunit modulates the gating kinetics and enhances stability of the channel complex. Associates with KCNQ1/KVLTQ1 alpha subunit to inhibit potassium currents. Functionally, may inhibit KCNQ4-mediated potassium currents. In Homo sapiens (Human), this protein is Potassium voltage-gated channel subfamily E member 4.